Reading from the N-terminus, the 153-residue chain is Sperm surface protein Sp17 (153 aa).

Positions phenylalanine 74–threonine 117 are disordered. Residues glutamate 82 to glutamate 106 are compositionally biased toward basic and acidic residues. An IQ domain is found at alanine 122–glutamate 151.

In terms of assembly, homodimer. May interact with ROPN1. Testis- and sperm-specific.

It is found in the membrane. Sperm surface zona pellucida binding protein. Helps to bind spermatozoa to the zona pellucida with high affinity. Might function in binding zona pellucida and carbohydrates. This Notamacropus eugenii (Tammar wallaby) protein is Sperm surface protein Sp17 (SPA17).